Reading from the N-terminus, the 532-residue chain is Cyclin-L1 (532 aa).

2 cyclin-like regions span residues 94–196 (ELIQ…RVLK) and 209–293 (KIIV…ETLR). Thr331 is modified (phosphothreonine). Residues 332 to 532 (PALSTLGGFS…SRSGHGRHRR (201 aa)) are disordered. A phosphoserine mark is found at Ser341 and Ser344. Residues Lys345 and Lys353 each participate in a glycyl lysine isopeptide (Lys-Gly) (interchain with G-Cter in SUMO2) cross-link. Positions 348-358 (SPREVKAEEKS) are enriched in basic and acidic residues. Phosphoserine occurs at positions 358 and 361. A compositionally biased stretch (basic and acidic residues) spans 367–376 (VKKEPEDRQQ). Lys368 participates in a covalent cross-link: Glycyl lysine isopeptide (Lys-Gly) (interchain with G-Cter in SUMO2). Ser380 carries the phosphoserine modification. Composition is skewed to basic residues over residues 388–424 (DSKR…RRSR), 444–458 (RRHH…KAKH), 466–482 (SNRH…RSQS), and 492–504 (KKHR…HRDR). The segment at 396 to 438 (RSASRSRSRTRSRSRSHSPRRHYNNRRSRSGTYSSRSRSRSRS) is RS. Position 451 is a phosphoserine (Ser451). The segment covering 505–514 (RERSRSFERS) has biased composition (basic and acidic residues). Basic residues predominate over residues 515–532 (HKGKHHGGSRSGHGRHRR).

This sequence belongs to the cyclin family. Cyclin L subfamily. In terms of assembly, interacts with POLR2A via its hyperphosphorylated C-terminal domain (CTD). Interacts with CDK11A, CDK11B, CDK12 and CDK13. May form a ternary complex with CDK11B and casein kinase II (CKII). Interacts with pre-mRNA-splicing factors, including at least SRSF1, SRSF2 and SRSF7/SLU7. Widely expressed (at protein level).

The protein resides in the nucleus speckle. It localises to the nucleus. The protein localises to the nucleoplasm. Its subcellular location is the cytoplasm. Involved in pre-mRNA splicing. Functions in association with cyclin-dependent kinases (CDKs). May play a role in the regulation of RNA polymerase II (pol II). Inhibited by the CDK-specific inhibitor CDKN1A/p21. This Mus musculus (Mouse) protein is Cyclin-L1 (Ccnl1).